The primary structure comprises 60 residues: UPF0434 protein YcaR (60 aa).

The protein belongs to the UPF0434 family.

The protein is UPF0434 protein YcaR of Escherichia coli O81 (strain ED1a).